The sequence spans 261 residues: MASTKDRENFVYIAKLAEQAERYEEMVDSMKNVANLDVELTIEERNLLSVGYKNVIGARRASWRILSSIEQKEESKGNDVNAKRIKEYRHKVETELSNICIDVMRVIDEHLIPSAAAGESTVFYYKMKGDYYRYLAEFKTGNEKKEAGDQSMKAYESATTAAEAELPPTHPIRLGLALNFSVFYYEILNSPERACHLAKQAFDEAISELDTLNEESYKDSTLIMQLLRDNLTLWTSDIPEDGEDSQKANGTAKFGGGDDAE.

The disordered stretch occupies residues 237-261 (DIPEDGEDSQKANGTAKFGGGDDAE).

Belongs to the 14-3-3 family.

This chain is 14-3-3-like protein B, found in Vicia faba (Broad bean).